The primary structure comprises 445 residues: Glucose-6-phosphate isomerase (445 aa).

Glutamate 284 acts as the Proton donor in catalysis. Catalysis depends on residues histidine 305 and lysine 419.

This sequence belongs to the GPI family.

It is found in the cytoplasm. The enzyme catalyses alpha-D-glucose 6-phosphate = beta-D-fructose 6-phosphate. It functions in the pathway carbohydrate biosynthesis; gluconeogenesis. The protein operates within carbohydrate degradation; glycolysis; D-glyceraldehyde 3-phosphate and glycerone phosphate from D-glucose: step 2/4. In terms of biological role, catalyzes the reversible isomerization of glucose-6-phosphate to fructose-6-phosphate. This Leptospira interrogans serogroup Icterohaemorrhagiae serovar Lai (strain 56601) protein is Glucose-6-phosphate isomerase.